The following is a 1136-amino-acid chain: Coiled-coil domain-containing protein 136 (1136 aa).

The disordered stretch occupies residues 1–46; it reads MQAMDGEVLLPALYEEEEEEEEEEEEVEEEQVEKGGSLGSLSMGKH. Positions 14–31 are enriched in acidic residues; it reads YEEEEEEEEEEEEVEEEQ. Ser50 is subject to Phosphoserine. Coiled-coil stretches lie at residues 293 to 631 and 681 to 730; these read VMQL…QNQE and LQAL…QTQS. 4 disordered regions span residues 741–773, 814–837, 965–990, and 1040–1111; these read GKNS…KSYV, GSVS…DPAE, NRPS…NGVR, and KKER…PDPP. Residues 743–752 show a composition bias toward polar residues; that stretch reads NSGSRAPSTE. Residues 839–972 are a coiled coil; sequence EDLEHFEETV…KENRPSISSE (134 aa). Over residues 976–989 the composition is skewed to low complexity; the sequence is KNVNKNMNKNANGV. Residues 1017–1057 adopt a coiled-coil conformation; it reads YYKASQRRLDELMKEEKEIEEARKKEREKKAKKDLCKLATN. Positions 1040–1052 are enriched in basic and acidic residues; the sequence is KKEREKKAKKDLC. Over residues 1067–1091 the composition is skewed to acidic residues; sequence EPTEDEEENFEEYREGEDESCEAAE. Residues 1112 to 1132 traverse the membrane as a helical segment; it reads IFSLPLVGLVVISALLWCWWA.

In terms of tissue distribution, present at high level in testis (at protein level).

It is found in the cytoplasmic vesicle. The protein resides in the secretory vesicle. Its subcellular location is the acrosome membrane. Functionally, may play a role in acrosome formation in spermatogenesis and in fertilization. This Mus musculus (Mouse) protein is Coiled-coil domain-containing protein 136 (Ccdc136).